A 231-amino-acid polypeptide reads, in one-letter code: MGQARDRVNYSFKRLKEIPEELRPREKLLKLGPENLSDEELLAVILGSGSKGADVLSLSKELIKMGWEELEKKSVEELLKVRGLGLVKALQVKALVELSKRFKGGKSRISIRNPQEAFEFLKDKFDERRESLIALYLDLSNRLLDWEVVAIGNVNTVFSKPKDILFKAVKLSANGIIIAHNHPQGEPSPSNEDLNFTERLKKACELLGFELLDHLILSEGRYFSFREEGVL.

One can recognise an MPN domain in the interval 110–231 (SIRNPQEAFE…YFSFREEGVL (122 aa)). Zn(2+)-binding residues include H180, H182, and D193. Positions 180 to 193 (HNHPQGEPSPSNED) match the JAMM motif motif.

This sequence belongs to the UPF0758 family.

The protein is UPF0758 protein aq_1610 of Aquifex aeolicus (strain VF5).